Here is a 194-residue protein sequence, read N- to C-terminus: uncharacterized protein (194 aa).

This is an uncharacterized protein from Ostreid herpesvirus 1 (isolate France) (OsHV-1).